The sequence spans 279 residues: Protease HtpX homolog (279 aa).

A run of 2 helical transmembrane segments spans residues 6 to 26 (VFVL…ALGG) and 29 to 49 (GAIL…WGSS). His130 is a Zn(2+) binding site. Glu131 is an active-site residue. His134 contacts Zn(2+). A run of 2 helical transmembrane segments spans residues 145–165 (IAAT…FFGG) and 176–196 (VAGI…QFAI). Residue Glu201 participates in Zn(2+) binding.

Belongs to the peptidase M48B family. The cofactor is Zn(2+).

Its subcellular location is the cell inner membrane. The chain is Protease HtpX homolog from Gemmatimonas aurantiaca (strain DSM 14586 / JCM 11422 / NBRC 100505 / T-27).